The following is a 454-amino-acid chain: UDP-N-acetylmuramate--L-alanine ligase (454 aa).

112–118 (GTHGKTT) contributes to the ATP binding site.

This sequence belongs to the MurCDEF family.

It is found in the cytoplasm. The catalysed reaction is UDP-N-acetyl-alpha-D-muramate + L-alanine + ATP = UDP-N-acetyl-alpha-D-muramoyl-L-alanine + ADP + phosphate + H(+). Its pathway is cell wall biogenesis; peptidoglycan biosynthesis. Cell wall formation. This chain is UDP-N-acetylmuramate--L-alanine ligase, found in Oleidesulfovibrio alaskensis (strain ATCC BAA-1058 / DSM 17464 / G20) (Desulfovibrio alaskensis).